A 505-amino-acid chain; its full sequence is Maturase K (505 aa).

The protein belongs to the intron maturase 2 family. MatK subfamily.

The protein resides in the plastid. It localises to the chloroplast. Functionally, usually encoded in the trnK tRNA gene intron. Probably assists in splicing its own and other chloroplast group II introns. This chain is Maturase K, found in Cubanola domingensis.